A 391-amino-acid chain; its full sequence is 3-ketoacyl-CoA thiolase, peroxisomal (391 aa).

The active-site Acyl-thioester intermediate is the C92. Catalysis depends on proton acceptor residues H335 and C366.

The protein belongs to the thiolase-like superfamily. Thiolase family. As to quaternary structure, homodimer.

The protein localises to the peroxisome. The enzyme catalyses an acyl-CoA + acetyl-CoA = a 3-oxoacyl-CoA + CoA. The protein operates within lipid metabolism; fatty acid metabolism. In Encephalitozoon cuniculi (strain GB-M1) (Microsporidian parasite), this protein is 3-ketoacyl-CoA thiolase, peroxisomal (FOX3).